We begin with the raw amino-acid sequence, 76 residues long: Exodeoxyribonuclease 7 small subunit (76 aa).

Belongs to the XseB family. In terms of assembly, heterooligomer composed of large and small subunits.

It is found in the cytoplasm. The enzyme catalyses Exonucleolytic cleavage in either 5'- to 3'- or 3'- to 5'-direction to yield nucleoside 5'-phosphates.. In terms of biological role, bidirectionally degrades single-stranded DNA into large acid-insoluble oligonucleotides, which are then degraded further into small acid-soluble oligonucleotides. This Geotalea daltonii (strain DSM 22248 / JCM 15807 / FRC-32) (Geobacter daltonii) protein is Exodeoxyribonuclease 7 small subunit.